A 411-amino-acid polypeptide reads, in one-letter code: Putative glycosyltransferase SCO3672 (411 aa).

10 consecutive transmembrane segments (helical) span residues 7–27, 45–65, 70–90, 120–140, 148–168, 169–189, 197–217, 227–247, 277–297, and 301–321; these read IAAA…LAAL, PVPL…AWAG, VVPL…VGAL, ETGP…TGAF, GVVG…AAVE, LMDG…GFLL, IALG…AAVL, GAGV…LVLL, GVVV…VLAH, and VGGQ…LGLL.

It belongs to the glycosyltransferase 4 family.

The protein resides in the cell membrane. In Streptomyces coelicolor (strain ATCC BAA-471 / A3(2) / M145), this protein is Putative glycosyltransferase SCO3672.